The chain runs to 233 residues: uncharacterized protein (233 aa).

This sequence belongs to the asfivirus H233R family.

This is an uncharacterized protein from African swine fever virus (isolate Tick/Malawi/Lil 20-1/1983) (ASFV).